A 463-amino-acid chain; its full sequence is Regulator of microtubule dynamics protein 3 (463 aa).

Topologically, residues methionine 1 to leucine 4 are mitochondrial intermembrane. Residues isoleucine 5–valine 27 traverse the membrane as a helical segment. Residues phenylalanine 28–valine 463 lie on the Cytoplasmic side of the membrane. Residues isoleucine 146–serine 161 carry the FFAT motif. Positions glycine 153 to cysteine 192 are disordered. Residues aspartate 173–glutamate 183 are compositionally biased toward basic and acidic residues. The stretch at alanine 279–lysine 302 forms a coiled coil.

Belongs to the RMDN family. Interacts with PTPN2. Interacts with microtubules. Interacts with VAPB. Interacts (FFAT motif) with MOSPD2 (via MSP domain).

It is found in the mitochondrion outer membrane. It localises to the cytoplasm. The protein localises to the nucleus. Its subcellular location is the cytoskeleton. The protein resides in the spindle. It is found in the spindle pole. In terms of biological role, involved in cellular calcium homeostasis regulation. The chain is Regulator of microtubule dynamics protein 3 (rmdn3) from Xenopus laevis (African clawed frog).